Consider the following 732-residue polypeptide: X-ray repair cross-complementing protein 5 (732 aa).

The VWFA domain maps to 9 to 161; that stretch reads AVVLCVDVGV…CNLKKSGISL (153 aa). The tract at residues 138-165 is leucine-zipper; the sequence is LSSPFSQDQLDVIICNLKKSGISLQFFL. Residue lysine 195 forms a Glycyl lysine isopeptide (Lys-Gly) (interchain with G-Cter in SUMO2) linkage. Residues 253 to 453 enclose the Ku domain; that stretch reads IGPNLSIKIV…CTPTEAQLSA (201 aa). The residue at position 258 (serine 258) is a Phosphoserine. An N6-acetyllysine modification is found at lysine 265. Position 318 is a phosphoserine (serine 318). Lysine 332 bears the N6-acetyllysine mark. Glycyl lysine isopeptide (Lys-Gly) (interchain with G-Cter in SUMO2) cross-links involve residues lysine 532 and lysine 534. Threonine 535 bears the Phosphothreonine mark. Glycyl lysine isopeptide (Lys-Gly) (interchain with G-Cter in SUMO2) cross-links involve residues lysine 567 and lysine 569. Residues serine 578, serine 580, and serine 581 each carry the phosphoserine; by PRKDC modification. An N6-acetyllysine modification is found at lysine 666. Glycyl lysine isopeptide (Lys-Gly) (interchain with G-Cter in SUMO2) cross-links involve residues lysine 670 and lysine 689. Residues 708–732 form a disordered region; it reads PKDKAKEDTTGPEEAGDVDDLLDMI. Threonine 716 carries the phosphothreonine; by PRKDC modification. Positions 717-732 are enriched in acidic residues; it reads TGPEEAGDVDDLLDMI. Residues 720–728 carry the EEXXXDL motif motif; the sequence is EEAGDVDDL.

The protein belongs to the ku80 family. Heterodimer composed of XRCC5/Ku80 and XRCC6/Ku70. Component of the core long-range non-homologous end joining (NHEJ) complex (also named DNA-PK complex) composed of PRKDC, LIG4, XRCC4, XRCC6/Ku70, XRCC5/Ku86 and NHEJ1/XLF. Additional component of the NHEJ complex includes PAXX. Following autophosphorylation, PRKDC dissociates from DNA, leading to formation of the short-range NHEJ complex, composed of LIG4, XRCC4, XRCC6/Ku70, XRCC5/Ku86 and NHEJ1/XLF. The XRCC5-XRCC6 dimer also associates with NAA15, and this complex displays DNA binding activity towards the osteocalcin FGF response element (OCFRE). In addition, XRCC5 binds to the osteoblast-specific transcription factors MSX2 and RUNX2. Interacts with ELF3. Interacts with APLF (via KBM motif). The XRCC5/XRCC6 dimer associates in a DNA-dependent manner with APEX1. Identified in a complex with DEAF1 and XRCC6. Interacts with NR4A3; the DNA-dependent protein kinase complex DNA-PK phosphorylates and activates NR4A3 and prevents NR4A3 ubiquitinylation and degradation. Interacts with RNF138. Interacts with CYREN (via KBM motif). Interacts with WRN (via KBM motif). Interacts (via N-terminus) with HSF1 (via N-terminus); this interaction is direct and prevents XRCC5/XRCC6 heterodimeric binding and non-homologous end joining (NHEJ) repair activities induced by ionizing radiation (IR). Interacts with DHX9; this interaction occurs in a RNA-dependent manner. Part of the HDP-RNP complex composed of at least HEXIM1, PRKDC, XRCC5, XRCC6, paraspeckle proteins (SFPQ, NONO, PSPC1, RBM14, and MATR3) and NEAT1 RNA. Interacts with ERCC6. Interacts with ATF7. The XRCC5-XRCC6 dimer associates with ALKBH2. Interacts with TPRN; TPRN interacts with a number of DNA damage response proteins, is recruited to sites of DNA damage and may play a role in DNA damage repair. Interacts with ERCC6L2. ADP-ribosylated by PARP3. Post-translationally, phosphorylated on serine residues. Phosphorylation by PRKDC may enhance helicase activity. In terms of processing, sumoylated. Ubiquitinated by RNF8 via 'Lys-48'-linked ubiquitination following DNA damage, leading to its degradation and removal from DNA damage sites. Ubiquitinated by RNF138, leading to remove the Ku complex from DNA breaks.

It localises to the nucleus. Its subcellular location is the nucleolus. The protein localises to the chromosome. Functionally, single-stranded DNA-dependent ATP-dependent helicase that plays a key role in DNA non-homologous end joining (NHEJ) by recruiting DNA-PK to DNA. Required for double-strand break repair and V(D)J recombination. Also has a role in chromosome translocation. The DNA helicase II complex binds preferentially to fork-like ends of double-stranded DNA in a cell cycle-dependent manner. It works in the 3'-5' direction. During NHEJ, the XRCC5-XRRC6 dimer performs the recognition step: it recognizes and binds to the broken ends of the DNA and protects them from further resection. Binding to DNA may be mediated by XRCC6. The XRCC5-XRRC6 dimer acts as a regulatory subunit of the DNA-dependent protein kinase complex DNA-PK by increasing the affinity of the catalytic subunit PRKDC to DNA by 100-fold. The XRCC5-XRRC6 dimer is probably involved in stabilizing broken DNA ends and bringing them together. The assembly of the DNA-PK complex to DNA ends is required for the NHEJ ligation step. The XRCC5-XRRC6 dimer probably also acts as a 5'-deoxyribose-5-phosphate lyase (5'-dRP lyase), by catalyzing the beta-elimination of the 5' deoxyribose-5-phosphate at an abasic site near double-strand breaks. XRCC5 probably acts as the catalytic subunit of 5'-dRP activity, and allows to 'clean' the termini of abasic sites, a class of nucleotide damage commonly associated with strand breaks, before such broken ends can be joined. The XRCC5-XRRC6 dimer together with APEX1 acts as a negative regulator of transcription. In association with NAA15, the XRCC5-XRRC6 dimer binds to the osteocalcin promoter and activates osteocalcin expression. As part of the DNA-PK complex, involved in the early steps of ribosome assembly by promoting the processing of precursor rRNA into mature 18S rRNA in the small-subunit processome. Binding to U3 small nucleolar RNA, recruits PRKDC and XRCC5/Ku86 to the small-subunit processome. Plays a role in the regulation of DNA virus-mediated innate immune response by assembling into the HDP-RNP complex, a complex that serves as a platform for IRF3 phosphorylation and subsequent innate immune response activation through the cGAS-STING pathway. The sequence is that of X-ray repair cross-complementing protein 5 (Xrcc5) from Mus musculus (Mouse).